The sequence spans 144 residues: Signal recognition particle 19 kDa protein (144 aa).

Residues 117 to 144 (TRTQKTGGGDQSLQQGEGSKKGKGKKKK) form a disordered region.

Belongs to the SRP19 family. As to quaternary structure, component of a signal recognition particle complex that consists of a 7SL RNA molecule of 300 nucleotides and six protein subunits: SRP72, SRP68, SRP54, SRP19, SRP14 and SRP9. Interacts with IPO5, IPO7, IPO8, KPNB1 and TNPO1. Interactions with IPO8 and TNPO1 may be involved in SRP19 import into the nucleus.

The protein localises to the cytoplasm. Its subcellular location is the nucleus. It localises to the nucleolus. It is found in the nucleoplasm. Functionally, component of the signal recognition particle (SRP) complex, a ribonucleoprotein complex that mediates the cotranslational targeting of secretory and membrane proteins to the endoplasmic reticulum (ER). Binds directly to 7SL RNA. Mediates binding of SRP54 to the SRP complex. In Canis lupus familiaris (Dog), this protein is Signal recognition particle 19 kDa protein.